Reading from the N-terminus, the 158-residue chain is MNQEKLAKLQAQVRIGGKGTARRKKKVVHRTATADDKKLQSSLKKLAVNNIAGIEEVNMIKDDGTVIHFNNPKVQASLSANTFAITGHAEVKQITEMLPGILSQLGADSLTSLRKLAEQFPRQVLDSKASKPEDIEEEDDDVPELVGNFDEASKNEAN.

Residues 33–98 (TADDKKLQSS…AEVKQITEML (66 aa)) form the NAC-A/B domain. The segment at 123 to 158 (QVLDSKASKPEDIEEEDDDVPELVGNFDEASKNEAN) is disordered. Residues 134 to 143 (DIEEEDDDVP) show a composition bias toward acidic residues.

It belongs to the NAC-beta family.

The polypeptide is Transcription factor BTF3 homolog 4 (btf3l4) (Xenopus laevis (African clawed frog)).